The chain runs to 527 residues: F-box protein SKIP2 (527 aa).

The region spanning 39 to 85 (DRDFTGDLPDECLAHVFQFLGAGDRKRCSLVCKRWLLVDGQSRHRLS) is the F-box domain.

In terms of assembly, part of a SCF (ASK-cullin-F-box) protein ligase complex. Interacts with SKP1A/ASK1, SKP1B/ASK2 and ASK11.

It is found in the nucleus. Its pathway is protein modification; protein ubiquitination. Its function is as follows. Component of SCF(ASK-cullin-F-box) E3 ubiquitin ligase complexes, which may mediate the ubiquitination and subsequent proteasomal degradation of target proteins. The polypeptide is F-box protein SKIP2 (SKIP2) (Arabidopsis thaliana (Mouse-ear cress)).